Consider the following 637-residue polypeptide: uncharacterized protein (637 aa).

A DNA-binding region (zn(2)-C6 fungal-type) is located at residues 7–34 (CDLCRLKKIKCSRGQPRCQTCTLFQADC). The C2H2-type; degenerate zinc-finger motif lies at 304–327 (SLCRTLCGQACLMAQQLNLHRKQS).

It localises to the nucleus. This is an uncharacterized protein from Schizosaccharomyces pombe (strain 972 / ATCC 24843) (Fission yeast).